Consider the following 893-residue polypeptide: Nitrate reductase [NADPH] (893 aa).

Residues 1–83 (MSVTTQQPAV…KPTPDAHVPR (83 aa)) form a disordered region. The span at 55–65 (PDFPLPPPANP) shows a compositional bias: pro residues. Over residues 71–83 (DIDKPTPDAHVPR) the composition is skewed to basic and acidic residues. Residue Cys-170 coordinates Mo-molybdopterin. The Cytochrome b5 heme-binding domain occupies 536 to 611 (NRIVELDELK…MPAYHIGTLS (76 aa)). His-571 and His-594 together coordinate heme. In terms of domain architecture, FAD-binding FR-type spans 641-752 (RTWSKALLSS…KGPIGKFEYL (112 aa)). FAD contacts are provided by residues 695 to 698 (RSYT), 712 to 716 (LIKIY), 726 to 728 (KMT), Ser-776, and Thr-779. 863–872 (LVLVCGPEGL) lines the NADP(+) pocket.

The protein belongs to the nitrate reductase family. In terms of assembly, homodimer. FAD serves as cofactor. It depends on heme as a cofactor. Mo-molybdopterin is required as a cofactor.

It carries out the reaction nitrite + NADP(+) + H2O = nitrate + NADPH + H(+). Its function is as follows. Nitrate reductase is a key enzyme involved in the first step of nitrate assimilation in plants, fungi and bacteria. The chain is Nitrate reductase [NADPH] (NIAD) from Leptosphaeria maculans (Blackleg fungus).